The primary structure comprises 490 residues: Probable alcohol acetyltransferase FCK4 (490 aa).

Belongs to the alcohol acetyltransferase FCK4 family.

The protein operates within secondary metabolite biosynthesis. In terms of biological role, probable alcohol acetyltransferase; part of the gene cluster that mediates the biosynthesis of cytokinins such as fusatin, fusatinic acids or 8-oxofusatin, known for their growth promoting and anti-senescence activities toward host plants. FCK1 is a bifunctional enzyme that performs the first steps in the biosynthesis of Fusarium cytokinins. It first condenses adenosine monophosphate (AMP) with dimethylallyl diphosphate (DMAPP) to yield isoprenyl adenosine monophosphate. It then catalyzes the removal of the phosphoribose to produce isopentenylaldehyde. The cytochrome P450 monooxygenase then converts isopentenylaldehyde to trans-zeatin. A condensation step converts trans-zeatin to fusatin which is further modified to produce fusatinic acid. The mechanism for oxidation of fusatin to fusatinic acid remains unknown. 8-oxofusatin could be produced through several pathways, via direct oxygenation of fusatin, or via the 8-oxo-pentenyladenine intermediate which itself must arise from either the prenylation of 8-oxo-AMP by FCK1 and/or oxygenation of isopentenylaldehyde. Both the FCK3 and FCK4 enzymes act downstream of the identified cytokinins to produce yet unidentified compounds. This is Probable alcohol acetyltransferase FCK4 from Fusarium pseudograminearum (strain CS3096) (Wheat and barley crown-rot fungus).